Consider the following 469-residue polypeptide: Deoxyribodipyrimidine photo-lyase (469 aa).

Positions 1-133 (MRLVWFRRDL…IWSAFDDKCV (133 aa)) constitute a Photolyase/cryptochrome alpha/beta domain. A (6R)-5,10-methylene-5,6,7,8-tetrahydrofolate-binding site is contributed by Glu-107.

Belongs to the DNA photolyase class-1 family. As to quaternary structure, monomer. Requires FAD as cofactor. The cofactor is (6R)-5,10-methylene-5,6,7,8-tetrahydrofolate.

It catalyses the reaction cyclobutadipyrimidine (in DNA) = 2 pyrimidine residues (in DNA).. Its function is as follows. Involved in repair of UV radiation-induced DNA damage. Catalyzes the light-dependent monomerization (300-600 nm) of cyclobutyl pyrimidine dimers (in cis-syn configuration), which are formed between adjacent bases on the same DNA strand upon exposure to ultraviolet radiation. This is Deoxyribodipyrimidine photo-lyase (phrA) from Vibrio cholerae serotype O1 (strain ATCC 39315 / El Tor Inaba N16961).